A 684-amino-acid polypeptide reads, in one-letter code: Histamine oxidase (684 aa).

A substrate-binding site is contributed by 316–327 (YFDSGEYLVGRD). Catalysis depends on aspartate 318, which acts as the Proton acceptor. A disulfide bridge links cysteine 337 with cysteine 363. Residue 399-404 (VGNYDY) coordinates substrate. Residue tyrosine 402 is the Schiff-base intermediate with substrate; via topaquinone of the active site. 2',4',5'-topaquinone is present on tyrosine 402. Cu cation contacts are provided by histidine 451 and histidine 453. Aspartate 460, glutamate 500, tyrosine 590, and aspartate 601 together coordinate Ca(2+). A Mn(2+)-binding site is contributed by aspartate 460. Residue aspartate 601 participates in Mn(2+) binding. Histidine 612 is a binding site for Cu cation. Residues 647–684 (SSAAGHCGTGSEREHAAPGGTAVGHSGPDTGGQGHCGH) form a disordered region. Over residues 675–684 (DTGGQGHCGH) the composition is skewed to gly residues.

Belongs to the copper/topaquinone oxidase family. Homodimer. Cu cation is required as a cofactor. The cofactor is Zn(2+). Requires Ca(2+) as cofactor. L-topaquinone serves as cofactor. It depends on Mn(2+) as a cofactor. Post-translationally, topaquinone (TPQ) is generated by copper-dependent autoxidation of a specific tyrosyl residue.

It is found in the cytoplasm. The catalysed reaction is a primary methyl amine + O2 + H2O = an aldehyde + H2O2 + NH4(+). It carries out the reaction histamine + O2 + H2O = imidazole-4-acetaldehyde + H2O2 + NH4(+). Its function is as follows. Oxidizes histamine. Other amines including phenethylamine, tyramine, tryptamine, putrescine, and benzylamine also serve as substrate. The polypeptide is Histamine oxidase (Arthrobacter globiformis).